Reading from the N-terminus, the 886-residue chain is Alanine--tRNA ligase (886 aa).

Zn(2+)-binding residues include His564, His568, Cys676, and His680.

It belongs to the class-II aminoacyl-tRNA synthetase family. It depends on Zn(2+) as a cofactor.

It is found in the cytoplasm. It catalyses the reaction tRNA(Ala) + L-alanine + ATP = L-alanyl-tRNA(Ala) + AMP + diphosphate. Functionally, catalyzes the attachment of alanine to tRNA(Ala) in a two-step reaction: alanine is first activated by ATP to form Ala-AMP and then transferred to the acceptor end of tRNA(Ala). Also edits incorrectly charged Ser-tRNA(Ala) and Gly-tRNA(Ala) via its editing domain. The protein is Alanine--tRNA ligase of Methylobacterium sp. (strain 4-46).